The sequence spans 191 residues: Thymidylate kinase (191 aa).

Residue 7 to 14 (GVDGAGKS) coordinates ATP.

This sequence belongs to the thymidylate kinase family.

The catalysed reaction is dTMP + ATP = dTDP + ADP. Phosphorylation of dTMP to form dTDP in both de novo and salvage pathways of dTTP synthesis. The sequence is that of Thymidylate kinase from Helicobacter pylori (strain Shi470).